Reading from the N-terminus, the 498-residue chain is 3-octaprenyl-4-hydroxybenzoate carboxy-lyase (498 aa).

Mn(2+) is bound at residue Asn-176. Prenylated FMN is bound by residues 179-181 (IYR), 193-195 (RWL), and 198-199 (RG). Position 242 (Glu-242) interacts with Mn(2+). The Proton donor role is filled by Asp-291.

It belongs to the UbiD family. In terms of assembly, homohexamer. Prenylated FMN serves as cofactor. The cofactor is Mn(2+).

It is found in the cell membrane. The enzyme catalyses a 4-hydroxy-3-(all-trans-polyprenyl)benzoate + H(+) = a 2-(all-trans-polyprenyl)phenol + CO2. It participates in cofactor biosynthesis; ubiquinone biosynthesis. Functionally, catalyzes the decarboxylation of 3-octaprenyl-4-hydroxy benzoate to 2-octaprenylphenol, an intermediate step in ubiquinone biosynthesis. The chain is 3-octaprenyl-4-hydroxybenzoate carboxy-lyase from Escherichia coli O6:K15:H31 (strain 536 / UPEC).